The chain runs to 357 residues: CCN family member 3 (357 aa).

Residues 1-31 (MQSVQSTSFCLRKQCLCLTFLLLHLLGQVAA) form the signal peptide. Residues 32-105 (TQRCPPQCPG…SNQTGICTAV (74 aa)) enclose the IGFBP N-terminal domain. Cystine bridges form between Cys-35–Cys-61, Cys-39–Cys-63, Cys-43–Cys-64, Cys-50–Cys-67, Cys-75–Cys-89, and Cys-81–Cys-102. Residue Asn-97 is glycosylated (N-linked (GlcNAc...) asparagine). One can recognise a VWFC domain in the interval 108-174 (DNCVFDGVIY…GECCEKWICG (67 aa)). In terms of domain architecture, TSP type-1 spans 205 to 250 (NCIEQTTEWTACSKSCGMGFSTRVTNRNRQCEMLKQTRLCMVRPCE). Cys-244 carries the S-palmitoyl cysteine lipid modification. 5 cysteine pairs are disulfide-bonded: Cys-264-Cys-301, Cys-281-Cys-315, Cys-292-Cys-331, Cys-295-Cys-333, and Cys-300-Cys-337. The CTCK domain maps to 264-338 (CLRTKKSLKA…GTCTCHTNCP (75 aa)). N-linked (GlcNAc...) asparagine glycosylation is present at Asn-280.

Belongs to the CCN family. In terms of assembly, interacts with FBLN1. Interacts (via CTCK domain) with NOTCH1 (via the EGF-like repeat region). Interacts with GJA1/CX43. Interacts with ITGA5:ITGB1, ITGAV:ITGB3 and ITGAV:ITGB5. Interacts with ZDHHC22; the interaction may lead to CCN3 palmitoylation. In terms of processing, may be palmitoylated on Cys-244, which is important for extracellular secretion. In terms of tissue distribution, expressed in endothelial cells (at protein level). Expressed in bone marrow and thymic cells.

The protein localises to the secreted. The protein resides in the cytoplasm. It localises to the cell junction. It is found in the gap junction. Functionally, immediate-early protein playing a role in various cellular processes including proliferation, adhesion, migration, differentiation and survival. Acts by binding to integrins or membrane receptors such as NOTCH1. Essential regulator of hematopoietic stem and progenitor cell function. Inhibits myogenic differentiation through the activation of Notch-signaling pathway. Inhibits vascular smooth muscle cells proliferation by increasing expression of cell-cycle regulators such as CDKN2B or CDKN1A independently of TGFB1 signaling. Ligand of integrins ITGAV:ITGB3 and ITGA5:ITGB1, acts directly upon endothelial cells to stimulate pro-angiogenic activities and induces angiogenesis. In endothelial cells, supports cell adhesion, induces directed cell migration (chemotaxis) and promotes cell survival. Also plays a role in cutaneous wound healing acting as integrin receptor ligand. Supports skin fibroblast adhesion through ITGA5:ITGB1 and ITGA6:ITGB1 and induces fibroblast chemotaxis through ITGAV:ITGB5. Seems to enhance bFGF-induced DNA synthesis in fibroblasts. Involved in bone regeneration as a negative regulator. Enhances the articular chondrocytic phenotype, whereas it repressed the one representing endochondral ossification. Impairs pancreatic beta-cell function, inhibits beta-cell proliferation and insulin secretion. Plays a role as negative regulator of endothelial pro-inflammatory activation reducing monocyte adhesion, its anti-inflammatory effects occur secondary to the inhibition of NF-kappaB signaling pathway. Contributes to the control and coordination of inflammatory processes in atherosclerosis. Attenuates inflammatory pain through regulation of IL1B- and TNF-induced MMP9, MMP2 and CCL2 expression. Inhibits MMP9 expression through ITGB1 engagement. Brain osteoanabolic hormone. Drives osteogenesis in osteochondral skeletal stem cells. During lactation, maintains the maternal skeleton and viability of offspring. The protein is CCN family member 3 of Homo sapiens (Human).